We begin with the raw amino-acid sequence, 198 residues long: Ribonuclease HII (198 aa).

The RNase H type-2 domain occupies 10-198 (HLVAGVDEVG…PVRRALGIAS (189 aa)). Residues Asp-16, Glu-17, and Asp-108 each coordinate a divalent metal cation.

It belongs to the RNase HII family. Requires Mn(2+) as cofactor. Mg(2+) serves as cofactor.

The protein localises to the cytoplasm. It catalyses the reaction Endonucleolytic cleavage to 5'-phosphomonoester.. Functionally, endonuclease that specifically degrades the RNA of RNA-DNA hybrids. The chain is Ribonuclease HII from Cronobacter sakazakii (strain ATCC BAA-894) (Enterobacter sakazakii).